We begin with the raw amino-acid sequence, 208 residues long: Transmembrane emp24 domain-containing protein p24beta2 (208 aa).

An N-terminal signal peptide occupies residues 1–21 (MSLKGTIVLLGLLWSFQATLG). Residues 22-176 (IRFVIDREEC…ENMSKRAVHK (155 aa)) lie on the Lumenal side of the membrane. One can recognise a GOLD domain in the interval 29-116 (EECFSHKAEY…HETIDFDVQL (88 aa)). A coiled-coil region spans residues 134–149 (LMEQISKLEEALYNIQ). N168 carries an N-linked (GlcNAc...) asparagine glycan. Residues 177–195 (ALFESFALIGASFLQVYLL) traverse the membrane as a helical segment. The Cytoplasmic segment spans residues 196–208 (RRLFERKLGMSRV). The short motif at 198–199 (LF) is the COPII vesicle coat-binding element. Positions 198-208 (LFERKLGMSRV) match the COPI vesicle coat-binding motif. A Required for the export from the endoplasmic reticulum to the Golgi motif is present at residues 207–208 (RV).

This sequence belongs to the EMP24/GP25L family. In terms of assembly, probably oligomerizes with other members of the EMP24/GP25L family. Associates with the COPI vesicle coat (coatomer). Associates with the COPII vesicle coat (coatomer). Interacts with p24delta5.

It localises to the golgi apparatus. Its subcellular location is the cis-Golgi network membrane. The protein localises to the golgi stack membrane. In terms of biological role, involved in vesicular protein trafficking. Mainly functions in the early secretory pathway but also in post-Golgi membranes. Thought to act as cargo receptor at the lumenal side for incorporation of secretory cargo molecules into transport vesicles and to be involved in vesicle coat formation at the cytoplasmic side. Interacts with p24delta5 at endoplasmic reticulum export sites for endoplasmic reticulum exit and coupled transport to the Golgi apparatus. This is Transmembrane emp24 domain-containing protein p24beta2 from Arabidopsis thaliana (Mouse-ear cress).